The sequence spans 459 residues: MPQLNGGGGDDLGANDELISFKDEGEQEEKNSENSSAERDLADVKSSLVNESETNQDSSSDSEAERRPPPRSESFRDKSRESLEEAAKRQDGGLFKGPPYPGYPFIMIPDLTSPYLPNGSLSPTARTYLQMKWPLLDVQAGSLQSRQTLKDARSPSPAHIVSNKVPVVQHPHHVHPLTPLITYSNEHFTPGNPPPHLPADVDPKTGIPRPPHPPDISPYYPLSPGTVGQIPHPLGWLVPQQGQPVYPITTGGFRHPYPTALTVNASMSRFPPHMVPPHHTLHTTGIPHPAIVTPTVKQESSQSDVGSLHSSKHQDSKKEEEKKKPHIKKPLNAFMLYMKEMRAKVVAECTLKESAAINQILGRRWHALSREEQAKYYELARKERQLHMQLYPGWSARDNYGKKKKRKRDKQPGETNEHSECFLNPCLSLPPITDLSAPKKCRARFGLDQQNNWCGPCSL.

Residues 1 to 11 (MPQLNGGGGDD) show a composition bias toward gly residues. Positions 1–53 (MPQLNGGGGDDLGANDELISFKDEGEQEEKNSENSSAERDLADVKSSLVNESE) are CTNNB1-binding. The segment at 1–96 (MPQLNGGGGD…AKRQDGGLFK (96 aa)) is disordered. Residues 19 to 43 (ISFKDEGEQEEKNSENSSAERDLAD) are compositionally biased toward basic and acidic residues. Residue Lys-22 forms a Glycyl lysine isopeptide (Lys-Gly) (interchain with G-Cter in SUMO2) linkage. A compositionally biased stretch (polar residues) spans 47 to 56 (SLVNESETNQ). A compositionally biased stretch (basic and acidic residues) spans 63–91 (EAERRPPPRSESFRDKSRESLEEAAKRQD). A phosphothreonine; by NLK mark is found at Thr-178 and Thr-189. A mediates interaction with MAD2L2 region spans residues 178–372 (TPLITYSNEH…RRWHALSREE (195 aa)). The span at 295-305 (TVKQESSQSDV) shows a compositional bias: polar residues. 2 disordered regions span residues 295 to 327 (TVKQ…KPHI) and 397 to 418 (RDNY…TNEH). Lys-297 participates in a covalent cross-link: Glycyl lysine isopeptide (Lys-Gly) (interchain with G-Cter in SUMO). Over residues 312–323 (KHQDSKKEEEKK) the composition is skewed to basic and acidic residues. Residues 327–395 (IKKPLNAFML…LHMQLYPGWS (69 aa)) constitute a DNA-binding region (HMG box). The Nuclear localization signal motif lies at 402–408 (KKKKRKR).

It belongs to the TCF/LEF family. As to quaternary structure, interacts with TGFB1I1. Interacts with SPIN1. Interacts with CTNNB1 (via the armadillo repeat); forms stable transcription complex. Interacts with EP300. Interacts with NLK. Interacts with CCDC85B (probably through the HMG box); prevents interaction with CTNNB1. Interacts with TNIK. Interacts with MAD2L2; prevents TCF7L2/TCF4 binding to promZIPK/DAPK3oters, negatively modulating its transcriptional activity. Interacts with ZIPK/DAPK3. Interacts with XIAP/BIRC4 and TLE3. Interacts with DDIT3/CHOP. The CTNNB1 and TCF7L2/TCF4 complex interacts with PML (isoform PML-4). Identified in a complex with CTNNB1 and FERMT2. Interacts with C11orf84/SPINDOC in a SPIN1-dependent manner. Interacts with DAZAP2; the interaction results in localization of DAZAP2 to the nucleus. Post-translationally, phosphorylated at Thr-178 and/or Thr-189 by NLK. Phosphorylation by NLK at these sites inhibits DNA-binding by TCF7L2/TCF4, thereby preventing transcriptional activation of target genes of the canonical Wnt/beta-catenin signaling pathway. Polysumoylated. Sumoylation is enhanced by PIAS family members and desumoylation is enhanced by SENP2. Sumoylation/desumoylation regulates TCF7L2/TCF4 transcription activity in the Wnt/beta-catenin signaling pathway without altering interaction with CTNNB1 nor binding to DNA. Detected in adult brain and liver, and at lower levels in intestine, with a clear increase from the distal colon to the duodenum. Detected at low levels in heart, lung, kidney, pituitary and testis.

The protein localises to the nucleus. It is found in the PML body. In terms of biological role, participates in the Wnt signaling pathway and modulates MYC expression by binding to its promoter in a sequence-specific manner. Acts as a repressor in the absence of CTNNB1, and as activator in its presence. Activates transcription from promoters with several copies of the Tcf motif CCTTTGATC in the presence of CTNNB1. TLE1, TLE2, TLE3 and TLE4 repress transactivation mediated by TCF7L2/TCF4 and CTNNB1. Expression of dominant-negative mutants results in cell-cycle arrest in G1. Necessary for the maintenance of the epithelial stem-cell compartment of the small intestine. This Mus musculus (Mouse) protein is Transcription factor 7-like 2 (Tcf7l2).